The primary structure comprises 100 residues: MILLKLYLTLAAILCQSRGTTSLDLDDLMTTNPEIQNEIINKHNDLRRTVDPPAKNMLKMSWDNIIAESAKRAALRCNQNEHTPVSGRTIGGCGCAEKIT.

The signal sequence occupies residues 1 to 22 (MILLKLYLTLAAILCQSRGTTS). Residues 41–81 (NKHNDLRRTVDPPAKNMLKMSWDNIIAESAKRAALRCNQNE) enclose the SCP domain.

It belongs to the CRISP family. In terms of processing, contains 8 disulfide bonds. Expressed by the venom gland.

Its subcellular location is the secreted. In terms of biological role, blocks ryanodine receptors, and potassium channels. This chain is Cysteine-rich venom protein VAR1, found in Varanus acanthurus (Ridge-tailed monitor).